A 335-amino-acid chain; its full sequence is Auxin-responsive protein IAA6 (335 aa).

The short motif at 51 to 55 (LKLGL) is the EAR-like (transcriptional repression) element. Disordered stretches follow at residues 81–102 (LSFFPKHSKTTSSTTTTTGAKR), 143–180 (KKGCCPPPPPPHGAPATPARNRPQTQGRGAAAPVVGWP), and 188–207 (NLASSSSSKHSPEPQNDNAN). In terms of domain architecture, PB1 spans 217-321 (NPLVKINMDG…TAKRLRVLRS (105 aa)).

It belongs to the Aux/IAA family. Homodimers and heterodimers. Highly expressed in roots. Expressed in shoots and flowers.

It is found in the nucleus. Aux/IAA proteins are short-lived transcriptional factors that function as repressors of early auxin response genes at low auxin concentrations. The chain is Auxin-responsive protein IAA6 (IAA6) from Oryza sativa subsp. japonica (Rice).